The primary structure comprises 198 residues: Putative glutathione S-transferase alpha-2 (198 aa).

Ser-2 is subject to N-acetylserine. One can recognise a GST N-terminal domain in the interval 5-81 (SVPSLTYFQG…YIAKKHNFMG (77 aa)). Glutathione contacts are provided by residues Tyr-11, Arg-45, 52–53 (QL), and 65–66 (QS). One can recognise a GST C-terminal domain in the interval 83-198 (NLEEEFLVDQ…YIKERPETKF (116 aa)).

It belongs to the GST superfamily. Alpha family.

It carries out the reaction RX + glutathione = an S-substituted glutathione + a halide anion + H(+). Its function is as follows. Conjugation of reduced glutathione to a wide number of exogenous and endogenous hydrophobic electrophiles. The protein is Putative glutathione S-transferase alpha-2 (gsta2-1) of Dictyostelium discoideum (Social amoeba).